Consider the following 202-residue polypeptide: Large ribosomal subunit protein uL4 (202 aa).

The segment covering 42–52 has biased composition (polar residues); sequence GTKAQKSRSQV. Residues 42–70 form a disordered region; it reads GTKAQKSRSQVSGTTKKSKKQKGGGARHG.

It belongs to the universal ribosomal protein uL4 family. Part of the 50S ribosomal subunit.

Functionally, one of the primary rRNA binding proteins, this protein initially binds near the 5'-end of the 23S rRNA. It is important during the early stages of 50S assembly. It makes multiple contacts with different domains of the 23S rRNA in the assembled 50S subunit and ribosome. Forms part of the polypeptide exit tunnel. The chain is Large ribosomal subunit protein uL4 from Xylella fastidiosa (strain 9a5c).